Reading from the N-terminus, the 131-residue chain is Lysosomal enzyme trafficking factor (131 aa).

A run of 2 helical transmembrane segments spans residues 8-28 (MGWI…YYVF) and 66-86 (LPFW…FLFL).

The protein belongs to the LYSET family.

It is found in the golgi apparatus membrane. In terms of biological role, required for mannose-6-phosphate-dependent trafficking of lysosomal enzymes. LYSET bridges GlcNAc-1-phosphate transferase (GNPTAB), to the membrane-bound transcription factor site-1 protease (MBTPS1), thus allowing proteolytic activation of the GNPTAB. GNPTAB is involved in the regulation of M6P-dependent Golgi-to-lysosome trafficking of lysosomal enzymes. LYSET is thus an essential factor for maturation and delivery of lysosomal hydrolases. This chain is Lysosomal enzyme trafficking factor (lyset-a), found in Xenopus laevis (African clawed frog).